We begin with the raw amino-acid sequence, 135 residues long: Small ribosomal subunit protein uS9 (135 aa).

The protein belongs to the universal ribosomal protein uS9 family.

This is Small ribosomal subunit protein uS9 from Petrotoga mobilis (strain DSM 10674 / SJ95).